A 398-amino-acid chain; its full sequence is UPF0261 protein RA0729 (398 aa).

It belongs to the UPF0261 family.

In Rhizobium meliloti (strain 1021) (Ensifer meliloti), this protein is UPF0261 protein RA0729.